The primary structure comprises 448 residues: Chromosomal replication initiator protein DnaA (448 aa).

The segment at 1–73 (MNTHLTETWE…VNALKLLTSK (73 aa)) is domain I, interacts with DnaA modulators. Positions 73–109 (KKYNIDFIVTTEEKIEENQKNHNNEKSNIVVNDEMST) are domain II. The domain III, AAA+ region stretch occupies residues 110 to 326 (MLNPKYTFDS…GALIRIVAFS (217 aa)). 4 residues coordinate ATP: G154, G156, K157, and T158. The segment at 327 to 448 (SLTNKEISID…KELNKRINQK (122 aa)) is domain IV, binds dsDNA.

Belongs to the DnaA family. In terms of assembly, oligomerizes as a right-handed, spiral filament on DNA at oriC.

It localises to the cytoplasm. Plays an essential role in the initiation and regulation of chromosomal replication. ATP-DnaA binds to the origin of replication (oriC) to initiate formation of the DNA replication initiation complex once per cell cycle. Binds the DnaA box (a 9 base pair repeat at the origin) and separates the double-stranded (ds)DNA. Forms a right-handed helical filament on oriC DNA; dsDNA binds to the exterior of the filament while single-stranded (ss)DNA is stabiized in the filament's interior. The ATP-DnaA-oriC complex binds and stabilizes one strand of the AT-rich DNA unwinding element (DUE), permitting loading of DNA polymerase. After initiation quickly degrades to an ADP-DnaA complex that is not apt for DNA replication. Binds acidic phospholipids. The protein is Chromosomal replication initiator protein DnaA of Clostridium botulinum (strain ATCC 19397 / Type A).